The following is a 114-amino-acid chain: Hydrogenase maturation factor HypA (114 aa).

Residue H2 coordinates Ni(2+). Zn(2+)-binding residues include C73, C76, C90, and C93.

Belongs to the HypA/HybF family.

Its function is as follows. Involved in the maturation of [NiFe] hydrogenases. Required for nickel insertion into the metal center of the hydrogenase. The polypeptide is Hydrogenase maturation factor HypA (Klebsiella pneumoniae subsp. pneumoniae (strain ATCC 700721 / MGH 78578)).